A 737-amino-acid polypeptide reads, in one-letter code: Glycogen [starch] synthase, muscle (737 aa).

Phosphoserine; by AMPK and PKA is present on Ser-8. Ser-11 is subject to Phosphoserine. Lys-39 lines the UDP pocket. Residues His-205 and Arg-211 each coordinate UDP-alpha-D-glucose. Residues His-291, Glu-292, Gln-294, His-297, and Lys-301 each contribute to the alpha-D-glucose 6-phosphate site. Arg-331 serves as a coordination point for UDP. Arg-331 contributes to the UDP-alpha-D-glucose binding site. Ser-412 is modified (phosphoserine). His-501 is a binding site for alpha-D-glucose 6-phosphate. The UDP-alpha-D-glucose site is built by Glu-510, Trp-512, and Gly-513. Residue Thr-515 participates in UDP binding. 2 residues coordinate alpha-D-glucose 6-phosphate: Arg-582 and Arg-586. The interval 634–737 is disordered; it reads YRYPRPASVP…PTSSLGEERN (104 aa). Ser-641 carries the phosphoserine; by DYRK2, GSK3-alpha, GSK3-beta and PASK modification. Ser-645 and Ser-649 each carry phosphoserine; by GSK3-alpha and GSK3-beta. Position 652 is a phosphoserine (Ser-652). Ser-653 carries the phosphoserine; by GSK3-alpha and GSK3-beta modification. A Phosphoserine; by CK2 modification is found at Ser-657. Residues 658-681 show a composition bias toward acidic residues; it reads EDEEDPRNGPLEEDSERYDEDEEA. Phosphoserine is present on Ser-672. A compositionally biased stretch (basic and acidic residues) spans 682–695; that stretch reads AKDRRNIRAPEWPR. Position 698 is a phosphoserine (Ser-698). Over residues 698 to 714 the composition is skewed to polar residues; that stretch reads SCTSSTSGSKRNSVDTA. A Phosphothreonine modification is found at Thr-700. Phosphoserine is present on Ser-710. The span at 715-737 shows a compositional bias: low complexity; that stretch reads TSSSLSTPSEPLSPTSSLGEERN. Thr-721 carries the phosphothreonine modification. Residues Ser-727 and Ser-731 each carry the phosphoserine modification.

This sequence belongs to the glycosyltransferase 3 family. As to quaternary structure, part of the GYS1-GYG1 complex, a heterooctamer composed of a tetramer of GYS1 and 2 dimers of GYG1, where each GYS1 protomer binds to one GYG1 subunit (via GYG1 C-terminus); the GYS1 tetramer may dissociate from GYG1 dimers to continue glycogen polymerization on its own. Post-translationally, phosphorylation at Ser-8 by AMPK inactivates the enzyme activity. Primed phosphorylation at Ser-657 (site 5) by CSNK2A1 and CSNK2A2 is required for inhibitory phosphorylation at Ser-641 (site 3a), Ser-645 (site 3b), Ser-649 (site 3c) and Ser-653 (site 4) by GSK3A an GSK3B. Phosphorylated at Ser-641 by PASK, leading to inactivation; phosphorylation by PASK is inhibited by glycogen. Phosphorylated at Ser-641 by DYRK2, leading to inactivation. Dephosphorylation at Ser-641 and Ser-645 by PP1 activates the enzyme.

It carries out the reaction [(1-&gt;4)-alpha-D-glucosyl](n) + UDP-alpha-D-glucose = [(1-&gt;4)-alpha-D-glucosyl](n+1) + UDP + H(+). It participates in glycan biosynthesis; glycogen biosynthesis. Allosteric activation by glucose-6-phosphate. Phosphorylation reduces the activity towards UDP-glucose. When in the non-phosphorylated state, glycogen synthase does not require glucose-6-phosphate as an allosteric activator; when phosphorylated it does. In terms of biological role, glycogen synthase participates in the glycogen biosynthetic process along with glycogenin and glycogen branching enzyme. Extends the primer composed of a few glucose units formed by glycogenin by adding new glucose units to it. In this context, glycogen synthase transfers the glycosyl residue from UDP-Glc to the non-reducing end of alpha-1,4-glucan. The chain is Glycogen [starch] synthase, muscle (GYS1) from Macaca mulatta (Rhesus macaque).